A 156-amino-acid polypeptide reads, in one-letter code: Small ribosomal subunit protein uS7 (156 aa).

The protein belongs to the universal ribosomal protein uS7 family. Part of the 30S ribosomal subunit. Contacts proteins S9 and S11.

Functionally, one of the primary rRNA binding proteins, it binds directly to 16S rRNA where it nucleates assembly of the head domain of the 30S subunit. Is located at the subunit interface close to the decoding center, probably blocks exit of the E-site tRNA. The protein is Small ribosomal subunit protein uS7 of Campylobacter hominis (strain ATCC BAA-381 / DSM 21671 / CCUG 45161 / LMG 19568 / NCTC 13146 / CH001A).